We begin with the raw amino-acid sequence, 404 residues long: WD repeat and SOCS box-containing protein 2 (404 aa).

WD repeat units lie at residues 105–148 (PPSR…LLLN), 151–191 (GHQD…KQIQ), 195–234 (GHLQ…LIRK), 237–276 (GHQS…RLRS), and 291–330 (VHMS…PVAF). The SOCS box domain occupies 356 to 404 (HVQFWTAPRVLSSLKHLCRKALRSFLTTYQVLALPIPKKMKEFLTYRTF).

Its pathway is protein modification; protein ubiquitination. May be a substrate-recognition component of a SCF-like ECS (Elongin-Cullin-SOCS-box protein) E3 ubiquitin ligase complex which mediates the ubiquitination and subsequent proteasomal degradation of target proteins. This chain is WD repeat and SOCS box-containing protein 2 (Wsb2), found in Mus musculus (Mouse).